The sequence spans 194 residues: Ion-translocating oxidoreductase complex subunit B (194 aa).

Residues 1–26 (MSGVLIAVAALLALAAVFGAVLGFAS) form a hydrophobic region. Positions 32-90 (EGDPIVDQIDSLLPQTQCGQCGHPGCRPYAEAIAEGEEHNRCPPGGQDTVVALSELLGR) constitute a 4Fe-4S domain. 12 residues coordinate [4Fe-4S] cluster: C49, C52, C57, C73, C116, C119, C122, C126, C146, C149, C152, and C156. 2 4Fe-4S ferredoxin-type domains span residues 107–136 (KVAY…GAAK) and 137–166 (LMHT…MLEV).

This sequence belongs to the 4Fe4S bacterial-type ferredoxin family. RnfB subfamily. The complex is composed of six subunits: RnfA, RnfB, RnfC, RnfD, RnfE and RnfG. [4Fe-4S] cluster is required as a cofactor.

It is found in the cell inner membrane. Its function is as follows. Part of a membrane-bound complex that couples electron transfer with translocation of ions across the membrane. This chain is Ion-translocating oxidoreductase complex subunit B, found in Alcanivorax borkumensis (strain ATCC 700651 / DSM 11573 / NCIMB 13689 / SK2).